The following is an 827-amino-acid chain: Translation initiation factor IF-2 (827 aa).

The segment at 49-205 is disordered; sequence ALNREKEEKE…GAPDKKREWE (157 aa). Composition is skewed to basic and acidic residues over residues 50 to 73, 96 to 106, 116 to 129, 137 to 150, 157 to 168, and 182 to 205; these read LNRE…KAEA, RPREQRSDRPQ, PEPR…RPGE, RPRD…KERG, FGEKKERPPFPR, and EAPK…REWE. The 170-residue stretch at 326-495 folds into the tr-type G domain; that stretch reads PRPPIVTVMG…LLVADLKELK (170 aa). The interval 335-342 is G1; the sequence is GHVDHGKT. GTP is bound at residue 335-342; sequence GHVDHGKT. Positions 360–364 are G2; it reads GITQH. A G3 region spans residues 381–384; the sequence is DTPG. Residues 381–385 and 435–438 each bind GTP; these read DTPGH and NKID. Residues 435–438 are G4; that stretch reads NKID. A G5 region spans residues 471-473; the sequence is SAL.

It belongs to the TRAFAC class translation factor GTPase superfamily. Classic translation factor GTPase family. IF-2 subfamily.

Its subcellular location is the cytoplasm. Its function is as follows. One of the essential components for the initiation of protein synthesis. Protects formylmethionyl-tRNA from spontaneous hydrolysis and promotes its binding to the 30S ribosomal subunits. Also involved in the hydrolysis of GTP during the formation of the 70S ribosomal complex. This chain is Translation initiation factor IF-2, found in Carboxydothermus hydrogenoformans (strain ATCC BAA-161 / DSM 6008 / Z-2901).